A 907-amino-acid chain; its full sequence is Interference hedgehog (907 aa).

The first 23 residues, 1 to 23 (MSLTRRFSLTLLLLLPLLTSLLA), serve as a signal peptide directing secretion. Over 24-709 (AIPVLQANLS…SHNETFNMNP (686 aa)) the chain is Extracellular. Ig-like C2-type domains lie at 42-149 (PGVR…ASIS), 152-233 (GADT…VRLA), 252-340 (PALL…FIEL), and 346-433 (PRIL…LQVN). 3 cysteine pairs are disulfide-bonded: Cys-65–Cys-127, Cys-173–Cys-221, and Cys-276–Cys-324. N-linked (GlcNAc...) asparagine glycosylation is found at Asn-101, Asn-203, Asn-300, and Asn-355. Cysteines 367 and 415 form a disulfide. Positions 427 to 474 (GTLLQVNPKQLPDGEGTGMDSGRSSARPTHSRKQKQQTQMVPPSAPNV) are disordered. Over residues 462–474 (QQTQMVPPSAPNV) the composition is skewed to polar residues. Fibronectin type-III domains are found at residues 468-578 (PPSA…LQRG) and 586-681 (VPEL…TQRP). A glycan (N-linked (GlcNAc...) asparagine) is linked at Asn-473. Heparin is bound by residues Arg-504, Lys-511, and Lys-513. Residues Asn-537 and Asn-548 are each glycosylated (N-linked (GlcNAc...) asparagine). Position 552 (Arg-552) interacts with heparin. Asn-568 carries an N-linked (GlcNAc...) asparagine glycan. Residues 676–688 (GRTQRPRASSTPQ) are compositionally biased toward polar residues. Positions 676 to 701 (GRTQRPRASSTPQPVLHAVDTTTPSH) are disordered. Residue Asn-702 is glycosylated (N-linked (GlcNAc...) asparagine). Residues 710 to 730 (MLTGTIGGGALLVLLVISACL) form a helical membrane-spanning segment. The Cytoplasmic portion of the chain corresponds to 731–907 (CLCRRRSSRG…SSGSLNSVGV (177 aa)). Disordered regions lie at residues 780–805 (AQQQ…QDND) and 829–881 (MSSS…NKPG). 2 stretches are compositionally biased toward low complexity: residues 781-794 (QQQQ…LQQQ) and 853-863 (NNNNLNQPGDG). The segment covering 865-878 (LANSADSPRLQASN) has biased composition (polar residues).

This sequence belongs to the immunoglobulin superfamily. IHOG family. Homodimer. Heterotetramer; 2 iHog chains bind 2 hh chains when facilitated by heparin, heparin is required to promote high-affinity interactions between hh and iHog.

The protein localises to the membrane. Mediates response to the active Hedgehog (Hh) protein signal in embryos, functioning upstream or at the level of patched (ptc). This chain is Interference hedgehog, found in Drosophila virilis (Fruit fly).